The following is a 750-amino-acid chain: Photosystem I P700 chlorophyll a apoprotein A1 (750 aa).

Helical transmembrane passes span 70 to 93, 156 to 179, 195 to 219, 291 to 309, 346 to 369, 385 to 411, 433 to 455, and 531 to 549; these read VFSAHFGQLSIIFLWLSGMYFHGA, LYCTAIGALVFAALMLFAGWFHYH, LNHHLAGLLGLGSLSWAGHQVHVSL, IAHHHLAIAILFLIAGHMY, WHAQLSLNLAMLGSLTIVVAHHMY, LSLFTHHMWIGGFLIVGAAAHAAIFMV, AIISHLNWACIFLGFHSFGLYIH, and FLVHHIHAFTIHVTVLILL. Residues Cys573 and Cys582 each coordinate [4Fe-4S] cluster. The next 2 helical transmembrane spans lie at 589 to 610 and 664 to 686; these read HVFLGLFWMYNSISVVIFHFSW and LSAYGLFFLGAHFVWAFSLMFLF. His675 provides a ligand contact to chlorophyll a'. Chlorophyll a is bound by residues Met683 and Tyr691. Trp692 is a binding site for phylloquinone. Residues 724-744 form a helical membrane-spanning segment; the sequence is AVGVTHYLLGGIATTWAFFLA.

The protein belongs to the PsaA/PsaB family. The PsaA/B heterodimer binds the P700 chlorophyll special pair and subsequent electron acceptors. PSI consists of a core antenna complex that captures photons, and an electron transfer chain that converts photonic excitation into a charge separation. The eukaryotic PSI reaction center is composed of at least 11 subunits. The cofactor is P700 is a chlorophyll a/chlorophyll a' dimer, A0 is one or more chlorophyll a, A1 is one or both phylloquinones and FX is a shared 4Fe-4S iron-sulfur center..

The protein localises to the plastid. It is found in the chloroplast thylakoid membrane. It catalyses the reaction reduced [plastocyanin] + hnu + oxidized [2Fe-2S]-[ferredoxin] = oxidized [plastocyanin] + reduced [2Fe-2S]-[ferredoxin]. Its function is as follows. PsaA and PsaB bind P700, the primary electron donor of photosystem I (PSI), as well as the electron acceptors A0, A1 and FX. PSI is a plastocyanin-ferredoxin oxidoreductase, converting photonic excitation into a charge separation, which transfers an electron from the donor P700 chlorophyll pair to the spectroscopically characterized acceptors A0, A1, FX, FA and FB in turn. Oxidized P700 is reduced on the lumenal side of the thylakoid membrane by plastocyanin. The sequence is that of Photosystem I P700 chlorophyll a apoprotein A1 from Jasminum nudiflorum (Winter jasmine).